The sequence spans 455 residues: Periplasmic pH-dependent serine endoprotease DegQ (455 aa).

Residues 1–27 (MKKQTQLLSALALSVGLTLSASFQAVA) form the signal peptide. Substrate is bound by residues E59, H109, D139, G212, 212-214 (GNS), 230-234 (TAILA), and 269-273 (LGIKG). Residues H109 and D139 each act as charge relay system in the active site. Residue S214 is the Charge relay system of the active site. PDZ domains lie at 258 to 349 (LIDF…LRNG) and 355 to 447 (EVTL…VRGN).

Belongs to the peptidase S1C family. DegQ can reversibly switch between different oligomeric forms that represent inactive (6-mer) and active (12- and 24-mer) protease states. Substrate binding triggers the conversion of the resting DegQ trimer and hexamer into catalytically active 12- and 24-mers. The conversion of 6-mer (DegQ6) into 12-mer (DegQ12) or 24-mer (DegQ24) is crucial in regulating protease activity.

It localises to the periplasm. It carries out the reaction Acts on substrates that are at least partially unfolded. The cleavage site P1 residue is normally between a pair of hydrophobic residues, such as Val-|-Val.. Its activity is regulated as follows. Inhibited by diisopropylfluorophosphate (DFP). DegQ could degrade transiently denatured and unfolded proteins which accumulate in the periplasm following stress conditions. DegQ is efficient with Val-Xaa and Ile-Xaa peptide bonds, suggesting a preference for a beta-branched side chain amino acids. Only unfolded proteins devoid of disulfide bonds appear capable to be cleaved, thereby preventing non-specific proteolysis of folded proteins. DegQ can substitute for the periplasmic protease DegP. This Escherichia coli (strain K12) protein is Periplasmic pH-dependent serine endoprotease DegQ (degQ).